A 124-amino-acid chain; its full sequence is Insulin-like growth factor 1 (124 aa).

Residues 1–19 constitute a propeptide that is removed on maturation; it reads IHFFYLGLCLLTLTSSAAA. Residues 20-48 are b; that stretch reads GPETLCGAELVDALQFVCGDRGFYFSKPT. Disulfide bonds link C25–C67, C37–C80, and C66–C71. The segment at 49–60 is c; the sequence is GYGSSSRRLHHK. The tract at residues 61-81 is a; the sequence is GIVDECCFQSCDLRRLEMYCA. The d stretch occupies residues 82-89; it reads PIKPPKSA. Residues 86–124 are disordered; the sequence is PKSARSVRAQRHTDMPKAQKEVHLKNTSRGNTGNRNYRM. Residues 90 to 124 constitute a propeptide, e peptide; it reads RSVRAQRHTDMPKAQKEVHLKNTSRGNTGNRNYRM. Over residues 96–109 the composition is skewed to basic and acidic residues; the sequence is RHTDMPKAQKEVHL. Positions 110–124 are enriched in polar residues; sequence KNTSRGNTGNRNYRM.

The protein belongs to the insulin family.

The protein resides in the secreted. Functionally, the insulin-like growth factors, isolated from plasma, are structurally and functionally related to insulin but have a much higher growth-promoting activity. Acts as a ligand for IGF1R. Binds to the alpha subunit of IGF1R, leading to the activation of the intrinsic tyrosine kinase activity which autophosphorylates tyrosine residues in the beta subunit thus initiatiating a cascade of down-stream signaling events leading to activation of the PI3K-AKT/PKB and the Ras-MAPK pathways. Binds to integrins. Its binding to integrins and subsequent ternary complex formation with integrins and IGFR1 are essential for IGF1 signaling. This Coturnix japonica (Japanese quail) protein is Insulin-like growth factor 1.